The chain runs to 1038 residues: Kinesin-like protein KIF17 (1038 aa).

In terms of domain architecture, Kinesin motor spans Ser5–Ile335. Gly91–Ser98 is an ATP binding site. A coiled-coil region spans residues Lys346–Val470. 3 disordered regions span residues Thr379–Asp401, Leu503–Glu559, and Asp636–Pro657. 2 stretches are compositionally biased toward polar residues: residues Ser533–Ser551 and Asp636–Ser651. The stretch at Gln748–Thr855 forms a coiled coil. Disordered regions lie at residues Val916 to Gln940 and Met976 to Leu1038. Positions Asn983 to Pro1000 are enriched in low complexity.

The protein belongs to the TRAFAC class myosin-kinesin ATPase superfamily. Kinesin family. As to quaternary structure, homodimer. Interacts with APBA1 (via PDZ domain); the interaction is direct and is required for association of KIF17 with the cargo that is to be transported. Interacts with IFT B complex components IFT52 and IFT57. Interacts with IFT70B. Interacts with PIWIL1. Interacts with TBATA. As to expression, highly expressed in the gray matter of the brain, especially in the hippocampus.

It is found in the cytoplasm. The protein resides in the cytoskeleton. The protein localises to the cell projection. Its subcellular location is the cilium. It localises to the dendrite. Functionally, dendrite-specific motor protein which, in association with the Apba1-containing complex (LIN-10-LIN-2-LIN-7 complex), transports vesicles containing N-methyl-D-aspartate (NMDA) receptor subunit NR2B along microtubules. This is Kinesin-like protein KIF17 (Kif17) from Mus musculus (Mouse).